Reading from the N-terminus, the 593-residue chain is ESX-1 secretion system protein EccCb1 (593 aa).

FtsK domains follow at residues 66 to 260 (RQEV…NETQ) and 350 to 546 (QVPL…EKND). ATP is bound by residues 85–92 (GAPQTGKS) and 377–384 (GAPKSGKT).

As to quaternary structure, part of the ESX-1 / type VII secretion system (T7SS), which is composed of cytosolic and membrane components. The ESX-1 membrane complex is composed of EccB1, EccCa1, EccCb1, EccD1 and EccE1.

It localises to the cytoplasm. Its function is as follows. Part of the ESX-1 / type VII specialized secretion system (T7SS), which exports several proteins including EsxA and EsxB. Plays a role in DNA conjugation, in both donor and recipient strains. This Mycolicibacterium smegmatis (strain ATCC 700084 / mc(2)155) (Mycobacterium smegmatis) protein is ESX-1 secretion system protein EccCb1.